An 876-amino-acid chain; its full sequence is MAATDTPWRPFRQAGALRRPMIDPAFVQGHPAYPDAFAQFFAGHGRYGHFAERVGNRNSRNGWRRRALAPGPAVGAEIVARHHEAAAQAGQGGDAARHQHRVDRLGQHHVRAAFEQVGRHFRLRGRSEHDRHRKGIVGADSPAHPPHQIARLLHAEIRVHHQKVDHFRPEVVFGIVAVVKAQQIPASQHAKGAGDDITAAEVEIAQQGAHTWGVVGHGLPSWQERTTFWPPAFRSPSDRSATSEFVAGLVNIGLSRLDKIWPGMPSSRFGFKRAYEGFMHVYRSHTCGQLKAADAGIQARLSGWVHRKRDHGNLLFVDLRDHYGITQCVIDVSSPVFAALDKARPESVITVTGKVVKRSAETINPRLPTGEIELQVAEVEIQSIADVLPIQVAGDQEYPEDMRLRYRFLDLRREDVHANMMLRSRVIAYLRQAMIGQGFTEFQTPILTASSPEGARDYLVPSRIHPGKFYALPQAPQQFKQLLMVAGFDKYFQIAPCFRDEAGRADRSPGEFYQLDFEMSYVTQDDVFAAIEPVLEGVFKEFGKGRAVTPAPFPRITYADSMLKYGSDKPDLRNPIIIADVTEPFRGSGFGLFAKLVDKGAVVRAIPAPGAAGQPRSWFDKLNDWARENGAGGLGYIQFAADGPKGPIAKNLEPARVEAIKAAANLKDGDAVFFACDKALPAAKFAGLVRTKIGNELDLLEKDVFKFCWTVDFPMYEINEETGLVEFSHNPFSMPQGGMDALLNQDPLTINAYQYDIVCNGVELSSGAIRNHRPDIMYKAFEIAGYSAAHVEEHFGGMLNAFKFGAPPHGGSAPGVDRIVMLLADQPNIREIILFPMNQQAQDLLMQAPAEIAMERLRELHIKVDLPKPKKEVKEG.

A unknown region spans residues 1 to 278 (MAATDTPWRP…FGFKRAYEGF (278 aa)). Positions 279 to 876 (MHVYRSHTCG…PKPKKEVKEG (598 aa)) are aspartyl-tRNA synthetase. E453 provides a ligand contact to L-aspartate. An aspartate region spans residues 477-480 (QQFK). The L-aspartate site is built by R499 and H729. Position 499 to 501 (499 to 501 (RDE)) interacts with ATP. E763 is a binding site for ATP. L-aspartate is bound at residue R770. 815–818 (GVDR) serves as a coordination point for ATP.

This sequence belongs to the class-II aminoacyl-tRNA synthetase family. Type 1 subfamily. As to quaternary structure, homodimer.

It is found in the cytoplasm. It carries out the reaction tRNA(Asx) + L-aspartate + ATP = L-aspartyl-tRNA(Asx) + AMP + diphosphate. In terms of biological role, aspartyl-tRNA synthetase with relaxed tRNA specificity since it is able to aspartylate not only its cognate tRNA(Asp) but also tRNA(Asn). Reaction proceeds in two steps: L-aspartate is first activated by ATP to form Asp-AMP and then transferred to the acceptor end of tRNA(Asp/Asn). The sequence is that of Aspartate--tRNA(Asp/Asn) ligase (aspS) from Paramagnetospirillum magneticum (strain ATCC 700264 / AMB-1) (Magnetospirillum magneticum).